Consider the following 134-residue polypeptide: 15.4 kDa class V heat shock protein (134 aa).

Residues 19–126 (SLNNYQENHV…LIDPSDVPES (108 aa)) enclose the sHSP domain.

The protein belongs to the small heat shock protein (HSP20) family. In terms of assembly, may form oligomeric structures.

It localises to the cytoplasm. The sequence is that of 15.4 kDa class V heat shock protein (HSP15.4) from Arabidopsis thaliana (Mouse-ear cress).